Here is a 130-residue protein sequence, read N- to C-terminus: Phosphoribosyl-AMP cyclohydrolase (130 aa).

Asp-77 provides a ligand contact to Mg(2+). Cys-78 lines the Zn(2+) pocket. Positions 79 and 81 each coordinate Mg(2+). Residues Cys-95 and Cys-102 each contribute to the Zn(2+) site.

This sequence belongs to the PRA-CH family. As to quaternary structure, homodimer. Mg(2+) serves as cofactor. Zn(2+) is required as a cofactor.

Its subcellular location is the cytoplasm. The enzyme catalyses 1-(5-phospho-beta-D-ribosyl)-5'-AMP + H2O = 1-(5-phospho-beta-D-ribosyl)-5-[(5-phospho-beta-D-ribosylamino)methylideneamino]imidazole-4-carboxamide. Its pathway is amino-acid biosynthesis; L-histidine biosynthesis; L-histidine from 5-phospho-alpha-D-ribose 1-diphosphate: step 3/9. In terms of biological role, catalyzes the hydrolysis of the adenine ring of phosphoribosyl-AMP. This Pseudomonas putida (strain W619) protein is Phosphoribosyl-AMP cyclohydrolase.